The primary structure comprises 264 residues: S-adenosylmethionine decarboxylase proenzyme (264 aa).

The active-site Schiff-base intermediate with substrate; via pyruvic acid is the serine 113. Serine 113 is modified (pyruvic acid (Ser); by autocatalysis). Residue histidine 118 is the Proton acceptor; for processing activity of the active site. Cysteine 141 serves as the catalytic Proton donor; for catalytic activity.

It belongs to the prokaryotic AdoMetDC family. Type 2 subfamily. Heterooctamer of four alpha and four beta chains arranged as a tetramer of alpha/beta heterodimers. It depends on pyruvate as a cofactor. Is synthesized initially as an inactive proenzyme. Formation of the active enzyme involves a self-maturation process in which the active site pyruvoyl group is generated from an internal serine residue via an autocatalytic post-translational modification. Two non-identical subunits are generated from the proenzyme in this reaction, and the pyruvate is formed at the N-terminus of the alpha chain, which is derived from the carboxyl end of the proenzyme. The post-translation cleavage follows an unusual pathway, termed non-hydrolytic serinolysis, in which the side chain hydroxyl group of the serine supplies its oxygen atom to form the C-terminus of the beta chain, while the remainder of the serine residue undergoes an oxidative deamination to produce ammonia and the pyruvoyl group blocking the N-terminus of the alpha chain.

It catalyses the reaction S-adenosyl-L-methionine + H(+) = S-adenosyl 3-(methylsulfanyl)propylamine + CO2. It participates in amine and polyamine biosynthesis; S-adenosylmethioninamine biosynthesis; S-adenosylmethioninamine from S-adenosyl-L-methionine: step 1/1. In terms of biological role, catalyzes the decarboxylation of S-adenosylmethionine to S-adenosylmethioninamine (dcAdoMet), the propylamine donor required for the synthesis of the polyamines spermine and spermidine from the diamine putrescine. This chain is S-adenosylmethionine decarboxylase proenzyme, found in Xanthomonas euvesicatoria pv. vesicatoria (strain 85-10) (Xanthomonas campestris pv. vesicatoria).